The following is a 222-amino-acid chain: Ribosome maturation factor RimM (222 aa).

Residues 1-22 form a disordered region; it reads MTERKQGAARPLNRPLVQPQGE. The PRC barrel domain occupies 145–222; sequence EDEFYWVDLI…RIVVDWGLDY (78 aa).

It belongs to the RimM family. As to quaternary structure, binds ribosomal protein uS19.

The protein resides in the cytoplasm. Its function is as follows. An accessory protein needed during the final step in the assembly of 30S ribosomal subunit, possibly for assembly of the head region. Essential for efficient processing of 16S rRNA. May be needed both before and after RbfA during the maturation of 16S rRNA. It has affinity for free ribosomal 30S subunits but not for 70S ribosomes. In Cupriavidus necator (strain ATCC 17699 / DSM 428 / KCTC 22496 / NCIMB 10442 / H16 / Stanier 337) (Ralstonia eutropha), this protein is Ribosome maturation factor RimM.